We begin with the raw amino-acid sequence, 58 residues long: Small ribosomal subunit protein bS21 (58 aa).

Over residues 32 to 42 (IRKREHYEKPS) the composition is skewed to basic and acidic residues. The tract at residues 32-58 (IRKREHYEKPSVKRKKKSEAARKRKFK) is disordered. Basic residues predominate over residues 43 to 58 (VKRKKKSEAARKRKFK).

Belongs to the bacterial ribosomal protein bS21 family.

The polypeptide is Small ribosomal subunit protein bS21 (Lachnoclostridium phytofermentans (strain ATCC 700394 / DSM 18823 / ISDg) (Clostridium phytofermentans)).